Consider the following 179-residue polypeptide: Shikimate kinase (179 aa).

22 to 27 provides a ligand contact to ATP; sequence GTGKSS. Residue S26 participates in Mg(2+) binding. Substrate-binding residues include D44, R68, and G90. Residue R128 coordinates ATP. R147 contacts substrate.

This sequence belongs to the shikimate kinase family. Monomer. Requires Mg(2+) as cofactor.

Its subcellular location is the cytoplasm. It carries out the reaction shikimate + ATP = 3-phosphoshikimate + ADP + H(+). The protein operates within metabolic intermediate biosynthesis; chorismate biosynthesis; chorismate from D-erythrose 4-phosphate and phosphoenolpyruvate: step 5/7. Catalyzes the specific phosphorylation of the 3-hydroxyl group of shikimic acid using ATP as a cosubstrate. In Geobacter metallireducens (strain ATCC 53774 / DSM 7210 / GS-15), this protein is Shikimate kinase.